Here is a 1080-residue protein sequence, read N- to C-terminus: MPAKGRYFLNEGEEGPDQDALYEKYQLTSQHGPLLLTLLLVAATACVALIIIAFSQGDPSRHQAILGMAFLVLAVFAALSVLMYVECLLRRWLRALALLTWACLVALGYVLVFDAWTKAACAWEQVPFFLFIVFVVYTLLPFSMRGAVAVGAVSTASHLLVLGSLMGGFTTPSVRVGLQLLANAVIFLCGNLTGAFHKHQMQDASRDLFTYTVKCIQIRRKLRIEKRQQENLLLSVLPAHISMGMKLAIIERLKEHGDRRCMPDNNFHSLYVKRHQNVSILYADIVGFTQLASDCSPKELVVVLNELFGKFDQIAKANECMRIKILGDCYYCVSGLPVSLPTHARNCVKMGLDMCQAIKQVREATGVDINMRVGIHSGNVLCGVIGLRKWQYDVWSHDVSLANRMEAAGVPGRVHITEATLKHLDKAYEVEDGHGQQRDPYLKEMNIRTYLVIDPRSQQPPPPSQHLPRPKGDAALKMRASVRMTRYLESWGAARPFAHLNHRESVSSGETHVPNGRRPKSVPQRHRRTPDRSMSPKGRSEDDSYDDEMLSAIEGLSSTRPCCSKSDDFYTFGSIFLEKGFEREYRLAPIPRARHDFACASLIFVCILLVHVLLMPRTAALGVSFGLVACVLGLVLGLCFATKFSRCCPARGTLCTISERVETQPLLRLTLAVLTIGSLLTVAIINLPLMPFQVPELPVGNETGLLAASSKTRALCEPLPYYTCSCVLGFIACSVFLRMSLEPKVVLLTVALVAYLVLFNLSPCWQWDCCGQGLGNLTKPNGTTSGTPSCSWKDLKTMTNFYLVLFYITLLTLSRQIDYYCRLDCLWKKKFKKEHEEFETMENVNRLLLENVLPAHVAAHFIGDKLNEDWYHQSYDCVCVMFASVPDFKVFYTECDVNKEGLECLRLLNEIIADFDELLLKPKFSGVEKIKTIGSTYMAAAGLSVASGHENQELERQHAHIGVMVEFSIALMSKLDGINRHSFNSFRLRVGINHGPVIAGVIGARKPQYDIWGNTVNVASRMESTGELGKIQVTEETCTILQGLGYSCECRGLINVKGKGELRTYFVCTDTAKFQGLGLN.

Over 1-33 (MPAKGRYFLNEGEEGPDQDALYEKYQLTSQHGP) the chain is Cytoplasmic. 6 helical membrane-spanning segments follow: residues 34–54 (LLLTLLLVAATACVALIIIAF), 63–83 (QAILGMAFLVLAVFAALSVLM), 95–117 (ALALLTWACLVALGYVLVFDAWT), 122–142 (AWEQVPFFLFIVFVVYTLLPF), 147–167 (AVAVGAVSTASHLLVLGSLMG), and 176–196 (VGLQLLANAVIFLCGNLTGAF). The Cytoplasmic portion of the chain corresponds to 197–594 (HKHQMQDASR…YRLAPIPRAR (398 aa)). In terms of domain architecture, Guanylate cyclase 1 spans 279–406 (SILYADIVGF…HDVSLANRME (128 aa)). Aspartate 284, isoleucine 285, and aspartate 328 together coordinate Mg(2+). ATP-binding positions include 284–289 (DIVGFT), 326–328 (LGD), and arginine 372. Residues 454–474 (DPRSQQPPPPSQHLPRPKGDA) are disordered. Residues 477–482 (KMRASV) form a mediates regulation of adenylate cyclase activity by C5 alpha-induced G- beta and gamma pathway region. A mediates regulation of adenylate cyclase activity by sphingosine 1-phosphate-induced G alpha 13 pathway region spans residues 491–499 (WGAARPFAH). The disordered stretch occupies residues 504-546 (ESVSSGETHVPNGRRPKSVPQRHRRTPDRSMSPKGRSEDDSYD). Residues 506 to 584 (VSSGETHVPN…IFLEKGFERE (79 aa)) form a modulates adenylate cyclase activity by modulating the binding of G(s)alpha to the high-affinity G(s)alpha binding site in 7C1a/7C2 region. Positions 515–529 (NGRRPKSVPQRHRRT) are enriched in basic residues. The next 3 helical transmembrane spans lie at 595-615 (HDFACASLIFVCILLVHVLLM), 620-640 (ALGVSFGLVACVLGLVLGLCF), and 669-688 (LTLAVLTIGSLLTVAIINLP). Asparagine 701 carries N-linked (GlcNAc...) asparagine glycosylation. The next 2 membrane-spanning stretches (helical) occupy residues 718 to 737 (PLPYYTCSCVLGFIACSVFL) and 746 to 773 (VLLTVALVAYLVLFNLSPCWQWDCCGQG). Asparagine 776 and asparagine 781 each carry an N-linked (GlcNAc...) asparagine glycan. The chain crosses the membrane as a helical span at residues 794 to 814 (DLKTMTNFYLVLFYITLLTLS). Over 815–1080 (RQIDYYCRLD…TAKFQGLGLN (266 aa)) the chain is Cytoplasmic. The Guanylate cyclase 2 domain maps to 879-1023 (CVMFASVPDF…NTVNVASRME (145 aa)). ATP-binding positions include lysine 931, 1010–1012 (DIW), 1017–1021 (NVASR), and lysine 1057.

It belongs to the adenylyl cyclase class-4/guanylyl cyclase family. It depends on Mg(2+) as a cofactor. Mn(2+) serves as cofactor. Post-translationally, phosphorylated by PRKCD.

Its subcellular location is the membrane. It carries out the reaction ATP = 3',5'-cyclic AMP + diphosphate. With respect to regulation, activated by the G protein alpha subunit. Activated by the G protein beta and gamma subunit complex. Activated by GNA13 and GNA12. Ethanol and phorbol 12,13-dibutanoate significantly potentiate adenylate cyclase activity generated in response to the activation of the prostanoid receptor by the agonist prostaglandin E1(1-) in a PKC-dependent manner. Inhibited by lithium. Catalyzes the formation of cAMP in response to activation of G protein-coupled receptors. Functions in signaling cascades activated namely by thrombin and sphingosine 1-phosphate and mediates regulation of cAMP synthesis through synergistic action of the stimulatory G alpha protein with GNA13. Also, during inflammation, mediates zymosan-induced increase intracellular cAMP, leading to protein kinase A pathway activation in order to modulate innate immune responses through heterotrimeric G proteins G(12/13). Functions in signaling cascades activated namely by dopamine and C5 alpha chain and mediates regulation of cAMP synthesis through synergistic action of the stimulatory G protein with G beta:gamma complex. Functions, through cAMP response regulation, to keep inflammation under control during bacterial infection by sensing the presence of serum factors, such as the bioactive lysophospholipid (LPA) that regulate LPS-induced TNF-alpha production. However, it is also required for the optimal functions of B and T cells during adaptive immune responses by regulating cAMP synthesis in both B and T cells. This Homo sapiens (Human) protein is Adenylate cyclase type 7.